Consider the following 209-residue polypeptide: Imidazole glycerol phosphate synthase subunit HisH (209 aa).

Residues 1–205 (MIAIIDYGMG…KGVVESWKSS (205 aa)) form the Glutamine amidotransferase type-1 domain. Residue C79 is the Nucleophile of the active site. Residues H180 and E182 contribute to the active site.

As to quaternary structure, heterodimer of HisH and HisF.

Its subcellular location is the cytoplasm. It catalyses the reaction 5-[(5-phospho-1-deoxy-D-ribulos-1-ylimino)methylamino]-1-(5-phospho-beta-D-ribosyl)imidazole-4-carboxamide + L-glutamine = D-erythro-1-(imidazol-4-yl)glycerol 3-phosphate + 5-amino-1-(5-phospho-beta-D-ribosyl)imidazole-4-carboxamide + L-glutamate + H(+). The enzyme catalyses L-glutamine + H2O = L-glutamate + NH4(+). Its pathway is amino-acid biosynthesis; L-histidine biosynthesis; L-histidine from 5-phospho-alpha-D-ribose 1-diphosphate: step 5/9. IGPS catalyzes the conversion of PRFAR and glutamine to IGP, AICAR and glutamate. The HisH subunit catalyzes the hydrolysis of glutamine to glutamate and ammonia as part of the synthesis of IGP and AICAR. The resulting ammonia molecule is channeled to the active site of HisF. This is Imidazole glycerol phosphate synthase subunit HisH from Bacillus cereus (strain ATCC 10987 / NRS 248).